The chain runs to 99 residues: Large ribosomal subunit protein uL23 (99 aa).

Belongs to the universal ribosomal protein uL23 family. In terms of assembly, part of the 50S ribosomal subunit. Contacts protein L29, and trigger factor when it is bound to the ribosome.

In terms of biological role, one of the early assembly proteins it binds 23S rRNA. One of the proteins that surrounds the polypeptide exit tunnel on the outside of the ribosome. Forms the main docking site for trigger factor binding to the ribosome. This Clavibacter michiganensis subsp. michiganensis (strain NCPPB 382) protein is Large ribosomal subunit protein uL23.